Here is a 299-residue protein sequence, read N- to C-terminus: Bifunctional protein FolD 1 (299 aa).

NADP(+) contacts are provided by residues 168–170, Ser-193, and Ile-234; that span reads GRS.

The protein belongs to the tetrahydrofolate dehydrogenase/cyclohydrolase family. Homodimer.

The catalysed reaction is (6R)-5,10-methylene-5,6,7,8-tetrahydrofolate + NADP(+) = (6R)-5,10-methenyltetrahydrofolate + NADPH. It carries out the reaction (6R)-5,10-methenyltetrahydrofolate + H2O = (6R)-10-formyltetrahydrofolate + H(+). Its pathway is one-carbon metabolism; tetrahydrofolate interconversion. Catalyzes the oxidation of 5,10-methylenetetrahydrofolate to 5,10-methenyltetrahydrofolate and then the hydrolysis of 5,10-methenyltetrahydrofolate to 10-formyltetrahydrofolate. The polypeptide is Bifunctional protein FolD 1 (Mesorhizobium japonicum (strain LMG 29417 / CECT 9101 / MAFF 303099) (Mesorhizobium loti (strain MAFF 303099))).